Here is a 397-residue protein sequence, read N- to C-terminus: Lipoyl synthase 2, chloroplastic (397 aa).

The N-terminal 35 residues, 1-35, are a transit peptide targeting the chloroplast; it reads MIEQSLSKPSFSLSIPIPKAPKSKSSFFCSYSKIR. Residues 49-85 are disordered; it reads AKHPQNSTTINNGSSSSASVDLKNNEKGPYPYPGGGK. Over residues 54–67 the composition is skewed to low complexity; it reads NSTTINNGSSSSAS. Residues Cys-128, Cys-133, Cys-139, Cys-159, Cys-163, Cys-166, and Ser-374 each contribute to the [4Fe-4S] cluster site. In terms of domain architecture, Radical SAM core spans 142 to 363; the sequence is GGGDGIATAT…KEYGESIGFR (222 aa).

It belongs to the radical SAM superfamily. Lipoyl synthase family. It depends on [4Fe-4S] cluster as a cofactor.

The protein resides in the plastid. It is found in the chloroplast. It catalyses the reaction [[Fe-S] cluster scaffold protein carrying a second [4Fe-4S](2+) cluster] + N(6)-octanoyl-L-lysyl-[protein] + 2 oxidized [2Fe-2S]-[ferredoxin] + 2 S-adenosyl-L-methionine + 4 H(+) = [[Fe-S] cluster scaffold protein] + N(6)-[(R)-dihydrolipoyl]-L-lysyl-[protein] + 4 Fe(3+) + 2 hydrogen sulfide + 2 5'-deoxyadenosine + 2 L-methionine + 2 reduced [2Fe-2S]-[ferredoxin]. It participates in protein modification; protein lipoylation via endogenous pathway; protein N(6)-(lipoyl)lysine from octanoyl-[acyl-carrier-protein]: step 2/2. In terms of biological role, catalyzes the radical-mediated insertion of two sulfur atoms into the C-6 and C-8 positions of the octanoyl moiety bound to the lipoyl domains of lipoate-dependent enzymes, thereby converting the octanoylated domains into lipoylated derivatives. This Populus trichocarpa (Western balsam poplar) protein is Lipoyl synthase 2, chloroplastic.